Consider the following 140-residue polypeptide: Class I hydrophobin 1 (140 aa).

The signal sequence occupies residues 1 to 18 (MKFAAVVVLAAAAAAVSA). Positions 22-60 (AQRMARGLPPKAPIRRHGTPADTEKRSHPSSTGGGQCNT) are disordered. 4 disulfides stabilise this stretch: C58/C119, C65/C113, C66/C99, and C120/C133.

It belongs to the fungal hydrophobin family. In terms of assembly, self-assembles to form functional amyloid fibrils called rodlets. Self-assembly into fibrillar rodlets occurs spontaneously at hydrophobic:hydrophilic interfaces and the rodlets further associate laterally to form amphipathic monolayers.

The protein resides in the secreted. It localises to the cell wall. Its function is as follows. Aerial growth, conidiation, and dispersal of filamentous fungi in the environment rely upon a capability of their secreting small amphipathic proteins called hydrophobins (HPBs) with low sequence identity. Class I can self-assemble into an outermost layer of rodlet bundles on aerial cell surfaces, conferring cellular hydrophobicity that supports fungal growth, development and dispersal; whereas Class II form highly ordered films at water-air interfaces through intermolecular interactions but contribute nothing to the rodlet structure. In Pisolithus tinctorius (Dead man's foot), this protein is Class I hydrophobin 1.